The following is a 1129-amino-acid chain: MEIETDQSIEAMDTQDTQEVEILTSDLQQTQQQRNSPPQLPKFKNLIQPQLHAVGAVTQLPSENGNMPPQQLLADSSSTSFGDGEAMGIDDESKEDQFRSETTFSFTVENVVQLKSQRLSPPVYVRMLPWRIMVIPNDRALGFFLQCNGENDSPTWSCNAIAELRLKCHKPDAQPFTRARIKHLFYSKENDYGYSNFITWQELKDSEKSYVHNNSITLEVHVVADAPHGVLWDSKKHTGYVGLKNQGATCYMNSLLQTLYFTNSLRLSVYRIPTEADDSSKSVGLSLQRVFHELQFGDRPVGTKKLTKSFGWETLDSFMQHDVQEFLRVLLDKLESKMKGTILEGTIPGLFEGKMSSYIKCKNVDYNSTRYETFYDIQLNIKDKKNIYESFQDYVAPETLEGDNKYDAGVHGLQEASKGVIFTSFPPVLHLHLMRFQYDPVTDSSIKYNDRFEFYEHINLDRYLAESENTLADYVLHAVLVHSGDNHGGHYVVFINPKADGRWFKFDDDVVSSCRKQEAIEQNYGGMDDEISFHAKCSNAYMLVYIRQSELDRVLGDITESEISSDLVERLDLEKRIEMARRKERGEANTYVSVHVILEENFEEQHKRRLFDLEKVHPRVFRIKQNQTVDELVDLFVRGFGVSRQRMRMWNLCTAQTQKFSHFDFVAEGSRTIEQISTSQKPWVIWLQLAWTDVPGPLPPFNPKTESLLFLKYYDPRNKRLNYIGCTQQPHTRRLIDLVPDVNSKLGFEPDTELTIYDEYADKKLVNLNEPIESALFIPQDHLQGHILIFERENVDAKLDLPTVGDYFLDLVYRIEIIFSDKCNPNEPDFTLELSNRYNYDQLANAVAERLNTDPQKLQFFMCINNYKETAGNAVPYTFKGTIKDLVSYTKQSSTKRIFYQRLSLSIHELDNKKQFKCVWVSSDLKDEKELVLYPNKNDTVKGLLEEAAKKISFAENSRRKLRLLKISNHKIVAVCKDDIPLDTLLKSNESITTAQGAQKTFRIEEVPAEDMQLAENEFLIPVAHFSKELYNSFGIPFLTKARQGEPYGALKQRIQRRLNVQDKEWENYKFCVISMGHNADVNDNTPVDLEVYRSWTSGQLPFFGLDHINKSRKRSSLNFSEKAIKIYN.

A disordered region spans residues 1-20 (MEIETDQSIEAMDTQDTQEV). An MATH domain is found at 101-222 (ETTFSFTVEN…NNSITLEVHV (122 aa)). One can recognise a USP domain in the interval 241-548 (VGLKNQGATC…NAYMLVYIRQ (308 aa)). The active-site Nucleophile is the C250. The Proton acceptor role is filled by H490. S1117 carries the post-translational modification Phosphoserine.

The protein belongs to the peptidase C19 family.

Its subcellular location is the nucleus. The enzyme catalyses Thiol-dependent hydrolysis of ester, thioester, amide, peptide and isopeptide bonds formed by the C-terminal Gly of ubiquitin (a 76-residue protein attached to proteins as an intracellular targeting signal).. In terms of biological role, hydrolase that deubiquitinates target proteins. The chain is Ubiquitin carboxyl-terminal hydrolase 7 (Usp7) from Drosophila melanogaster (Fruit fly).